The sequence spans 461 residues: Photosystem II CP43 reaction center protein (461 aa).

Residues 1–2 (ME) constitute a propeptide that is removed on maturation. Residue threonine 3 is modified to N-acetylthreonine. Threonine 3 carries the post-translational modification Phosphothreonine. 5 consecutive transmembrane segments (helical) span residues 57-81 (LFEVAHFVPEKPMYEQGLILLPHLA), 122-143 (LIGPETLEESFPFFGYVWKDKS), 166-188 (KSVYFGGVYDTWAPGGGDVRKIT), 243-263 (KPFAWARRAFVWSGEAYLSYS), and 279-300 (WFNNTAYPSEFYGPTGPEASQA). Glutamate 355 contributes to the [CaMn4O5] cluster binding site. A helical transmembrane segment spans residues 435–459 (RARAAAAGFEKGIDRDTEPVLSMTP).

It belongs to the PsbB/PsbC family. PsbC subfamily. PSII is composed of 1 copy each of membrane proteins PsbA, PsbB, PsbC, PsbD, PsbE, PsbF, PsbH, PsbI, PsbJ, PsbK, PsbL, PsbM, PsbT, PsbX, PsbY, PsbZ, Psb30/Ycf12, at least 3 peripheral proteins of the oxygen-evolving complex and a large number of cofactors. It forms dimeric complexes. Binds multiple chlorophylls and provides some of the ligands for the Ca-4Mn-5O cluster of the oxygen-evolving complex. It may also provide a ligand for a Cl- that is required for oxygen evolution. PSII binds additional chlorophylls, carotenoids and specific lipids. is required as a cofactor.

The protein resides in the plastid. It is found in the chloroplast thylakoid membrane. Its function is as follows. One of the components of the core complex of photosystem II (PSII). It binds chlorophyll and helps catalyze the primary light-induced photochemical processes of PSII. PSII is a light-driven water:plastoquinone oxidoreductase, using light energy to abstract electrons from H(2)O, generating O(2) and a proton gradient subsequently used for ATP formation. This is Photosystem II CP43 reaction center protein from Psilotum nudum (Whisk fern).